Here is a 565-residue protein sequence, read N- to C-terminus: Formate--tetrahydrofolate ligase (565 aa).

Residue 65 to 72 (TPAGEGKT) participates in ATP binding.

Belongs to the formate--tetrahydrofolate ligase family.

It carries out the reaction (6S)-5,6,7,8-tetrahydrofolate + formate + ATP = (6R)-10-formyltetrahydrofolate + ADP + phosphate. Its pathway is one-carbon metabolism; tetrahydrofolate interconversion. The chain is Formate--tetrahydrofolate ligase from Syntrophus aciditrophicus (strain SB).